Consider the following 555-residue polypeptide: E3 ubiquitin-protein ligase ARIH1 (555 aa).

The span at 1–47 shows a compositional bias: acidic residues; sequence MDSDEGYNYEFDEDEECSEEDSGAEEEEDEDDDEPDDDNLDLGEVEL. The interval 1–93 is disordered; the sequence is MDSDEGYNYE…GGGGGPGHEQ (93 aa). Gly residues predominate over residues 65–90; it reads ETGGGGGSALGPGGGGGGGGGGGGPG. The segment at 103 to 151 is UBA-like; that stretch reads TAEQILQHMVECIREVNEVIQNPATITRILLSHFNWDKEKLMERYFDGN. Residue K140 is modified to N6-acetyllysine. Residues 180-391 form a TRIAD supradomain region; it reads QDMPCQICYL…SAWYNCNRYN (212 aa). The Zn(2+) site is built by C184, C187, C201, H203, C206, C209, C229, C234, C274, C279, C295, C297, C302, C305, H310, C315, C342, and C345. The RING-type 1 zinc finger occupies 184-234; that stretch reads CQICYLNYPNSYFTGLECGHKFCMQCWSEYLTTKIMEEGMGQTISCPAHGC. The segment at 254-315 adopts an IBR-type zinc-finger fold; sequence LKYQHLITNS…GENWHDPVKC (62 aa). The segment at 342 to 373 adopts an RING-type 2; atypical zinc-finger fold; that stretch reads CPKCHVTIEKDGGCNHMVCRNQNCKAEFCWVC. The active site involves C355. The Zn(2+) site is built by C360, C365, C370, C373, H380, and C387. The segment at 406–555 is ariadne domain; that stretch reads RAALQRYLFY…EKDLWEYIED (150 aa).

It belongs to the RBR family. Ariadne subfamily. Interacts (via the first RING-type zinc finger) with UBE2L3. Associates with cullin-RING ubiquitin ligase (CRL) complexes containing CUL1, CUL2 and CUL3. Interacts with neddylated CUL1. Interacts with neddylated CUL2. Interacts with neddylated CUL3. Interacts with neddylated CUL4A.

Its subcellular location is the cytoplasm. The protein resides in the nucleus. It is found in the cajal body. It carries out the reaction [E2 ubiquitin-conjugating enzyme]-S-ubiquitinyl-L-cysteine + [acceptor protein]-L-lysine = [E2 ubiquitin-conjugating enzyme]-L-cysteine + [acceptor protein]-N(6)-ubiquitinyl-L-lysine.. It participates in protein modification; protein ubiquitination. With respect to regulation, autoinhibited by the ariadne domain, which masks the second RING-type zinc finger that contains the active site and inhibits the E3 activity. Inhibition is relieved upon binding to neddylated cullin-RING ubiquitin ligase complexes, which activate the E3 ligase activity of ARIH1. Functionally, E3 ubiquitin-protein ligase, which catalyzes ubiquitination of target proteins together with ubiquitin-conjugating enzyme E2 UBE2L3. Acts as an atypical E3 ubiquitin-protein ligase by working together with cullin-RING ubiquitin ligase (CRL) complexes and initiating ubiquitination of CRL substrates: associates with CRL complexes and specifically mediates addition of the first ubiquitin on CRLs targets. The initial ubiquitin is then elongated by CDC34/UBE2R1 and UBE2R2. E3 ubiquitin-protein ligase activity is activated upon binding to neddylated cullin-RING ubiquitin ligase complexes. Plays a role in protein translation in response to DNA damage by mediating ubiquitination of EIF4E2, the consequences of EIF4E2 ubiquitination are however unclear. According to a report, EIF4E2 ubiquitination leads to promote EIF4E2 cap-binding and protein translation arrest. According to another report EIF4E2 ubiquitination leads to its subsequent degradation. Acts as the ligase involved in ISGylation of EIF4E2. In vitro, controls the degradation of the LINC (LInker of Nucleoskeleton and Cytoskeleton) complex member SUN2 and may therefore have a role in the formation and localization of the LINC complex, and as a consequence, may act in nuclear subcellular localization and nuclear morphology. In Bos taurus (Bovine), this protein is E3 ubiquitin-protein ligase ARIH1 (ARIH1).